We begin with the raw amino-acid sequence, 208 residues long: Small ribosomal subunit protein eS8 (208 aa).

The segment at 1-27 is disordered; it reads MGISRDNWHKRRKTGGKRKPYHKKRKY. The N-myristoyl glycine moiety is linked to residue G2. Residues 8–26 are compositionally biased toward basic residues; it reads WHKRRKTGGKRKPYHKKRK. 2 positions are modified to N6-acetyllysine: K37 and K128. T130 carries the post-translational modification Phosphothreonine. S160 bears the Phosphoserine mark. Glycyl lysine isopeptide (Lys-Gly) (interchain with G-Cter in SUMO2) cross-links involve residues K170 and K193.

This sequence belongs to the eukaryotic ribosomal protein eS8 family. As to quaternary structure, component of the small ribosomal subunit. Identified in a IGF2BP1-dependent mRNP granule complex containing untranslated mRNAs. Part of the small subunit (SSU) processome, composed of more than 70 proteins and the RNA chaperone small nucleolar RNA (snoRNA) U3.

The protein localises to the cytoplasm. Its subcellular location is the membrane. It localises to the nucleus. It is found in the nucleolus. In terms of biological role, component of the small ribosomal subunit. The ribosome is a large ribonucleoprotein complex responsible for the synthesis of proteins in the cell. Part of the small subunit (SSU) processome, first precursor of the small eukaryotic ribosomal subunit. During the assembly of the SSU processome in the nucleolus, many ribosome biogenesis factors, an RNA chaperone and ribosomal proteins associate with the nascent pre-rRNA and work in concert to generate RNA folding, modifications, rearrangements and cleavage as well as targeted degradation of pre-ribosomal RNA by the RNA exosome. This is Small ribosomal subunit protein eS8 (RPS8) from Oryctolagus cuniculus (Rabbit).